The chain runs to 81 residues: Cytotoxin 4N (81 aa).

The N-terminal stretch at 1–21 is a signal peptide; it reads MKTLLLTLVVVTIVCLDLGYT. Cystine bridges form between Cys24/Cys42, Cys35/Cys59, Cys63/Cys74, and Cys75/Cys80.

The protein belongs to the three-finger toxin family. Short-chain subfamily. Type IA cytotoxin sub-subfamily. As to quaternary structure, monomer in solution; Homodimer and oligomer in the presence of negatively charged lipids forming a pore with a size ranging between 20 and 30 Angstroms. In terms of tissue distribution, expressed by the venom gland.

The protein localises to the secreted. It localises to the target cell membrane. In terms of biological role, shows cytolytic activity on many different cells by forming pore in lipid membranes. In vivo, increases heart rate or kills the animal by cardiac arrest. In addition, it binds to heparin with high affinity, interacts with Kv channel-interacting protein 1 (KCNIP1) in a calcium-independent manner, and binds to integrin alpha-V/beta-3 (ITGAV/ITGB3) with moderate affinity. This chain is Cytotoxin 4N, found in Naja atra (Chinese cobra).